A 467-amino-acid chain; its full sequence is Tel2-interacting protein 2 (467 aa).

Residues 4-45 (YKELARRLHTLQSKNEKEALEKQIDFLDKLVVEVDSLVHEQD) are a coiled coil.

It belongs to the TTI2 family. As to quaternary structure, component of the TTT complex composed of tel2, tti1 and tti2. Interacts with tel2 and ttiI1. Component of the ASTRA complex composed of at least rvb1, rvb2, tra1, tel2, tti1 and tti2.

It localises to the nucleus. Its function is as follows. Component of the tel2-tti1-tti2 (TTT) complex that stabilizes protein levels of the phosphatidylinositol 3-kinase-related protein kinase (PIKK) family proteins. The TTT complex is involved in the cellular resistance to DNA damage stresses, like ionizing radiation (IR), ultraviolet (UV) and mitomycin C (MMC). Component of the ASTRA complex involved in chromatin remodeling. The chain is Tel2-interacting protein 2 from Schizosaccharomyces pombe (strain 972 / ATCC 24843) (Fission yeast).